Reading from the N-terminus, the 193-residue chain is DNA damage-inducible transcript 4-like protein (193 aa).

It belongs to the DDIT4 family.

Its subcellular location is the cytoplasm. Functionally, inhibits cell growth by regulating the TOR signaling pathway upstream of the TSC1-TSC2 complex and downstream of AKT1. The protein is DNA damage-inducible transcript 4-like protein (DDIT4L) of Pongo abelii (Sumatran orangutan).